A 598-amino-acid polypeptide reads, in one-letter code: Arylsulfate sulfotransferase AssT (598 aa).

The signal sequence occupies residues methionine 1–alanine 27. 4-methylumbelliferone contacts are provided by histidine 279 and histidine 383. Cysteine 445 and cysteine 451 are oxidised to a cystine. Position 463 (histidine 463) interacts with 4-methylumbelliferone. The active-site Nucleophile; sulfurylated histidine covalent intermediate is histidine 463.

It belongs to the aryl sulfotransferase family. As to quaternary structure, homodimer. The disulfide bond is crucial for enzyme activity.

It localises to the periplasm. The catalysed reaction is an aryl sulfate + a phenol = an aryl sulfate + a phenol. The enzyme catalyses 4-methylumbelliferone sulfate + phenol = phenyl sulfate + 4-methylumbelliferone. Functionally, catalyzes the transfer of a sulfate group from a phenyl sulfate ester to other phenolic compounds. In vitro, is able to use 4-methylumbelliferyl sulfate and p-nitrophenyl sulfate (PNS) as donor substrates with phenol as the acceptor substrate. Cannot use 3'-phosphoadenosine-5'-phophosulfate (PAPS), the donor substrate of mammalian sulfotransferase. This chain is Arylsulfate sulfotransferase AssT, found in Escherichia coli O6:H1 (strain CFT073 / ATCC 700928 / UPEC).